Consider the following 292-residue polypeptide: Retinal homeobox protein Rx3 (292 aa).

Residues 1–27 (MRLVGSQYKDMEDRLSPSARLVRSPGS) are disordered. An Octapeptide motif motif is present at residues 32 to 39 (HSIESILG). Disordered regions lie at residues 53–72 (GSGKTGKDTEHLSPKKDSNK) and 85–107 (SPDLPDADGGKLSDDENPKKKHR). Basic and acidic residues-rich tracts occupy residues 57-72 (TGKDTEHLSPKKDSNK) and 92-102 (DGGKLSDDENP). A DNA-binding region (homeobox) is located at residues 106–165 (HRRNRTTFTTFQLHELERAFEKSHYPDVYSREELALKVNLPEVRVQVWFQNRRAKWRRQE). The OAR motif lies at 272-285 (TSIASLRMKAKEHI). A Nuclear localization signal motif is present at residues 278 to 282 (RMKAK).

Belongs to the paired homeobox family. Bicoid subfamily.

Its subcellular location is the nucleus. Functionally, plays a critical role in eye formation by regulating the initial specification of retinal cells and/or their subsequent proliferation. The chain is Retinal homeobox protein Rx3 (rx3) from Danio rerio (Zebrafish).